A 357-amino-acid chain; its full sequence is MVSGGRVGGGEGEAGEAAEVAVAMVDNEEEMAQAQAPPAAAVAARELVVGYALTSKKAKSFLQPKLRGLARKKGILFVAIDQKRPLSDQGPFDIVLHKLTGREWQQLLEEYREEHPEVTVLDPPGAIEHLLNRQSMLQEVSELDLSDCHGRVGVPKQLFVNTDPSSIPAAVMRAGLSLPLVAKPLVAKSHELSLAYDPISLTKLEPPLVLQEFVNHGGVLFKVYIVGDAIRVVRRFSLPNVDVGDLSNNAGVFRFPRVSCASANADDADLDPHVAELPPRPLLEILARELRRRLGLRLFNIDMIREHGTRDRFYVIDMNYFPGYGKMPGYEHVFTDFLLSLVQKEYKRRPSYSSCEG.

Positions 56 and 98 each coordinate 1D-myo-inositol 1,3,4-trisphosphate. Arginine 133 and lysine 183 together coordinate ATP. Positions 190 and 222 each coordinate 1D-myo-inositol 1,3,4-trisphosphate. Residues 211-222 (QEFVNHGGVLFK), serine 237, and serine 262 contribute to the ATP site. Mg(2+) is bound by residues aspartate 302, aspartate 317, and asparagine 319. Asparagine 319 is a binding site for 1D-myo-inositol 1,3,4-trisphosphate.

This sequence belongs to the ITPK1 family. As to quaternary structure, monomer. Requires Mg(2+) as cofactor. Expressed in roots, leaves, flowers, anthers and embryos.

The enzyme catalyses 1D-myo-inositol 3,4,5,6-tetrakisphosphate + ATP = 1D-myo-inositol 1,3,4,5,6-pentakisphosphate + ADP + H(+). The catalysed reaction is 1D-myo-inositol 1,3,4-trisphosphate + ATP = 1D-myo-inositol 1,3,4,5-tetrakisphosphate + ADP + H(+). It catalyses the reaction 1D-myo-inositol 1,3,4-trisphosphate + ATP = 1D-myo-inositol 1,3,4,6-tetrakisphosphate + ADP + H(+). Its function is as follows. Kinase that can phosphorylate various inositol polyphosphate such as Ins(3,4,5,6)P4 or Ins(1,3,4)P3 and participates in phytic acid biosynthesis in developing seeds. Phytic acid is the primary storage form of phosphorus in cereal grains and other plant seeds. The polypeptide is Inositol-tetrakisphosphate 1-kinase 3 (Oryza sativa subsp. japonica (Rice)).